Reading from the N-terminus, the 175-residue chain is uncharacterized protein (175 aa).

A disordered region spans residues 113–175; the sequence is AQLPRDSRGN…RTRSGGLERL (63 aa).

This is an uncharacterized protein from Bos taurus (Bovine).